Reading from the N-terminus, the 325-residue chain is Elongation factor P--(R)-beta-lysine ligase (325 aa).

Residue 76-78 (SPE) coordinates substrate. ATP is bound by residues 100-102 (RNE) and Asn-109. Tyr-118 contacts substrate. An ATP-binding site is contributed by 244–245 (EL). Glu-251 lines the substrate pocket. Residue Gly-300 participates in ATP binding.

It belongs to the class-II aminoacyl-tRNA synthetase family. EpmA subfamily. Homodimer.

The catalysed reaction is D-beta-lysine + L-lysyl-[protein] + ATP = N(6)-((3R)-3,6-diaminohexanoyl)-L-lysyl-[protein] + AMP + diphosphate + H(+). In terms of biological role, with EpmB is involved in the beta-lysylation step of the post-translational modification of translation elongation factor P (EF-P) on 'Lys-34'. Catalyzes the ATP-dependent activation of (R)-beta-lysine produced by EpmB, forming a lysyl-adenylate, from which the beta-lysyl moiety is then transferred to the epsilon-amino group of EF-P 'Lys-34'. The sequence is that of Elongation factor P--(R)-beta-lysine ligase from Salmonella gallinarum (strain 287/91 / NCTC 13346).